Consider the following 185-residue polypeptide: Pre-histone-like nucleoprotein (185 aa).

The residue at position 2 (serine 2) is an N-acetylserine; by host. Positions 2–23 (SILISPDNNTGWGLCSAGMYGG) are excised as a propeptide. A Phosphothreonine; by host modification is found at threonine 55. Serine 172 carries the phosphoserine; by host modification. The Nuclear localization signal signature appears at 175–185 (RVPVRSRPPRS).

Belongs to the adenoviridae histone-like nucleoprotein family. As to quaternary structure, interacts with the core-capsid bridging protein; this interaction bridges the virus core to the capsid. Interacts with host NPM1; this interaction might play a role in placing the pre-histone-like nucleoprotein on the viral DNA or regulating viral gene expression. Interacts with host HMGB1; this interaction inhibits host immune response. Cleaved near the N-terminus by the viral protease during virion maturation to form the mature protein.

It localises to the virion. The protein localises to the host nucleus. The protein resides in the host nucleolus. Plays a role in the inhibition of host immune response within the nucleus. Interacts with cellular nucleosomes and immobilizes the host immune danger signal HMGB1 on chromatin. In turn, prevents HMGB1 release out of the cell and thus decreases inflammation. Also plays a role in the wrapping and condensation of the viral DNA. May also promote viral genome import into the nucleus. The protein is Pre-histone-like nucleoprotein of Human adenovirus F serotype 40 (HAdV-40).